The sequence spans 363 residues: Two-pore potassium channel 1 (363 aa).

Residues 1–61 (MSSDAARTPL…DDVKIDEPPP (61 aa)) form a disordered region. Residues 1 to 78 (MSSDAARTPL…FSDLNPNLRR (78 aa)) are Cytoplasmic-facing. Positions 31 to 42 (SSRKRRLRRSRS) are enriched in basic residues. Residues 79–99 (VIMFLALYLTIGTLCFYLVRD) form a helical membrane-spanning segment. Positions 111-130 (DALYFCIVTMTTVGYGDLVP) form an intramembrane region, pore-forming. The helical transmembrane segment at 137 to 157 (LLACAFVFSGMVLVGHLLSRA) threads the bilayer. Residues 158-197 (ADYLVEKQEALLVRAFHLRQSFGPTDILKELHTNKLRYKC) lie on the Cytoplasmic side of the membrane. Residues 198–218 (YATCLVLVVLFIVGTIFLVMV) traverse the membrane as a helical segment. Residues 225–244 (SAFYCVCSTVTTLGYGDKSF) constitute an intramembrane region (pore-forming). The chain crosses the membrane as a helical span at residues 251–271 (LFAVFWILTSSICLAQFFLYV). Topologically, residues 272–363 (AELNTENKQR…LAQTTSQIQR (92 aa)) are cytoplasmic. EF-hand domains lie at 288–323 (LTRR…EMGK) and 327–362 (KDIS…SQIQ). The Endoplasmic reticulum release signal signature appears at 296 to 298 (DLE). Asp301, Asp303, Asp305, Glu312, Asp340, Asp342, Ser344, Thr346, and Asp351 together coordinate Ca(2+).

Belongs to the two pore domain potassium channel (TC 1.A.1.7) family. Homodimer. Interacts with GRF1 and GRF6, but only GRF6 modulates the channel activity. Phosphorylation at Ser-42 increases and stabilizes the interaction with 14-3-3 proteins. Detected in mesophyll cells, guard cells and vascular tissues of the leaves. Expressed in the hilum, where the funiculus is attached during fruit maturation and in the embryo. Also expressed at a lower level in seedlings, root tips and elongation zones, and flowers. Could be detected in mitotically active tissues.

The protein resides in the vacuole membrane. Could be activated by protein kinase C. Strongly induced by calcium. Blocked by barium, tetraethylammonium (TEA), quinine and quinidine. Its function is as follows. Voltage-independent, large conductance and potassium-selective tonoplast ion channel. Regulated by cytoplasmic calcium and pH. Does not mediate slow-vacuolar (SV) ionic currents, but essential to establish VK currents. Has some permeability for Rb(+) and NH(4)(+), but none for Na(+), Cs(+) or Li(+). Involved in intracellular K(+) redistribution and/or K(+) retranslocation between different tissues. The polypeptide is Two-pore potassium channel 1 (TPK1) (Arabidopsis thaliana (Mouse-ear cress)).